The following is a 202-amino-acid chain: Protein DCV1 (202 aa).

Residues 1-18 form the signal peptide; the sequence is MLNYKLILLFSSFLQLIS. The next 3 helical transmembrane spans lie at 91-107, 137-155, and 168-189; these read IGGL…LTFI, ILTL…LLCM, and LVWL…FLSF.

It localises to the membrane. The sequence is that of Protein DCV1 (DCV1) from Saccharomyces cerevisiae (strain ATCC 204508 / S288c) (Baker's yeast).